The primary structure comprises 372 residues: PqqA peptide cyclase (372 aa).

In terms of domain architecture, Radical SAM core spans 4–220 (APPPLSVLLE…ETARRQLGDR (217 aa)). The [4Fe-4S] cluster site is built by C18, C22, and C25.

The protein belongs to the radical SAM superfamily. PqqE family. Interacts with PqqD. The interaction is necessary for activity of PqqE. Requires [4Fe-4S] cluster as cofactor.

It carries out the reaction [PQQ precursor protein] + S-adenosyl-L-methionine = E-Y cross-linked-[PQQ precursor protein] + 5'-deoxyadenosine + L-methionine + H(+). It functions in the pathway cofactor biosynthesis; pyrroloquinoline quinone biosynthesis. Functionally, catalyzes the cross-linking of a glutamate residue and a tyrosine residue in the PqqA protein as part of the biosynthesis of pyrroloquinoline quinone (PQQ). The protein is PqqA peptide cyclase of Xanthomonas axonopodis pv. citri (strain 306).